Reading from the N-terminus, the 431-residue chain is Protein CLT2, chloroplastic (431 aa).

A chloroplast-targeting transit peptide spans 1 to 79; the sequence is MDTVLMATTP…PMRRPRFSVG (79 aa). The next 10 helical transmembrane spans lie at 99–119, 122–142, 163–183, 188–208, 212–232, 244–264, 284–304, 343–363, 365–385, and 403–423; these read VVIVALAVANRVLYKLALVPM, YPFFMAQLTTFGYVLIYFTIL, FAIIGFLEALGVATGMAAAAM, VIPILNQTYLVWQLLFALLIL, FLLNQIAGCLLVAVGVVVAVS, IGFLWPAVLVASAAFQAGASI, IFVVNSFGSGFQALFVFLLLP, ILPLLYISTNLAFNISLLHLV, ISSAIVSSLTMMLSVPLAVYI, and FTMGCIVLVLGLLLYNIPTTP.

It belongs to the CRT-like transporter family.

Its subcellular location is the plastid. It is found in the chloroplast membrane. In terms of biological role, involved in thiol transport from the plastid to the cytosol. Transports probably both glutathione (GSH) and its precursor, gamma-glutamylcysteine (gamma-EC). This Arabidopsis thaliana (Mouse-ear cress) protein is Protein CLT2, chloroplastic.